Consider the following 314-residue polypeptide: Signal peptidase I (314 aa).

The chain crosses the membrane as a helical span at residues 5–25 (LTIFLLISTLVTGIFWSFYCI). Residues 26–63 (KSFKNYLINKKIINNNNFHQEKIEKSKNKTYFLKSLAS) are Cytoplasmic-facing. A helical membrane pass occupies residues 64–84 (FFPIFLAIFIIRSFIYEPFQI). Topologically, residues 85–314 (PSGSMMPTLL…IRINRIGSIH (230 aa)) are extracellular. Residues Ser88 and Lys143 contribute to the active site.

The protein belongs to the peptidase S26 family.

It is found in the cell membrane. The enzyme catalyses Cleavage of hydrophobic, N-terminal signal or leader sequences from secreted and periplasmic proteins.. In Buchnera aphidicola subsp. Acyrthosiphon pisum (strain APS) (Acyrthosiphon pisum symbiotic bacterium), this protein is Signal peptidase I (lepB).